A 168-amino-acid chain; its full sequence is Endoribonuclease YbeY (168 aa).

Positions 128, 132, and 138 each coordinate Zn(2+).

This sequence belongs to the endoribonuclease YbeY family. It depends on Zn(2+) as a cofactor.

Its subcellular location is the cytoplasm. Single strand-specific metallo-endoribonuclease involved in late-stage 70S ribosome quality control and in maturation of the 3' terminus of the 16S rRNA. This Sphingopyxis alaskensis (strain DSM 13593 / LMG 18877 / RB2256) (Sphingomonas alaskensis) protein is Endoribonuclease YbeY.